We begin with the raw amino-acid sequence, 393 residues long: Phosphatidate cytidylyltransferase (393 aa).

Helical transmembrane passes span 49–69 (NFFRRLVLSIVMISGFCWISV), 73–93 (IYSFGLIIFLTISIIREIIGI), 108–128 (IILGLAVPIYSYLVFPSIMMM), 141–161 (LSFVCFYSYVAAFMCFVASLR), 171–191 (LFALIHLSTYTMAIAAKCAIF), 198–218 (FWFVFPALLVISNDISAYVVG), 237–257 (GFIGAFIFTTAVGFALGHLHV), and 290–310 (IHIIPFIFVASFVAPFSGFLA).

It belongs to the CDS family.

The protein localises to the membrane. The enzyme catalyses a 1,2-diacyl-sn-glycero-3-phosphate + CTP + H(+) = a CDP-1,2-diacyl-sn-glycerol + diphosphate. It functions in the pathway phospholipid metabolism; CDP-diacylglycerol biosynthesis; CDP-diacylglycerol from sn-glycerol 3-phosphate: step 3/3. The protein is Phosphatidate cytidylyltransferase (CDS1) of Encephalitozoon cuniculi (strain GB-M1) (Microsporidian parasite).